We begin with the raw amino-acid sequence, 847 residues long: Endo-beta-N-acetylglucosaminidase EndoSd (847 aa).

An N-terminal signal peptide occupies residues 1–36 (MDKRLLVKRTLGCVCAATLMGAILATHHDSLISVKA). Positions 65–377 (PLYAGYFRTW…HPVVDNISHT (313 aa)) constitute a GH18 domain. A glycoprotein is bound at residue histidine 107. The active-site Proton donor is the glutamate 186. Glutamate 188, glutamine 250, tyrosine 252, glutamate 288, glutamate 289, asparagine 295, and tyrosine 339 together coordinate a glycoprotein. LRR repeat units lie at residues 423–446 (LERYNKTLVLTVDKIHSLKGLEKL), 447–470 (SHLQKLELCQLSNVKEVTPDILPE), 483–506 (MTGLEKLNLRGLNRQTLDGIDVNG), and 507–530 (LTHLTSFDISHNSLDLSEKSADRK). Residues 683–836 (MENLAKGAKV…YTELQILGQR (154 aa)) form a carbohydrate-binding module (CBM) region. Residues lysine 704, aspartate 707, and glutamate 829 each coordinate Ca(2+).

It belongs to the glycosyl hydrolase 18 family.

It localises to the secreted. The protein localises to the host extracellular space. The catalysed reaction is an N(4)-(oligosaccharide-(1-&gt;3)-[oligosaccharide-(1-&gt;6)]-beta-D-Man-(1-&gt;4)-beta-D-GlcNAc-(1-&gt;4)-alpha-D-GlcNAc)-L-asparaginyl-[protein] + H2O = an oligosaccharide-(1-&gt;3)-[oligosaccharide-(1-&gt;6)]-beta-D-Man-(1-&gt;4)-D-GlcNAc + N(4)-(N-acetyl-beta-D-glucosaminyl)-L-asparaginyl-[protein]. Functionally, endoglucosidase that acts as a host immune evasion factor by mediating hydrolysis of the N-linked glycan from the Fc region of host immunoglobulin-gamma (IgG) during infection. Specifically catalyzes the hydrolysis of the beta-1,4 linkage between the first two N-acetylglucosamine residues of the complex-type N-linked glycan located on 'Asn-297' of the Fc region of IgG antibodies (IGHG1, IGHG2, IGHG3 or IGHG4), thereby preventing interaction between IgGs and Fc receptors and ability to activate the complement pathway. Shows a specificity for biantennary complex type N-glycans; does neither cleave larger complex type glycans nor oligomannose and nor hybrid-type glycans. Specifically acts on IgGs; does not act on immunoglobulin alpha, beta, delta or mu. This chain is Endo-beta-N-acetylglucosaminidase EndoSd, found in Streptococcus dysgalactiae.